The sequence spans 222 residues: Guanylate kinase (222 aa).

In terms of domain architecture, Guanylate kinase-like spans 19–197 (GFLFILSSPS…SVSLIKSIYL (179 aa)). 26–33 (SPSGAGKS) contributes to the ATP binding site.

Belongs to the guanylate kinase family.

It localises to the cytoplasm. It carries out the reaction GMP + ATP = GDP + ADP. Essential for recycling GMP and indirectly, cGMP. This Bartonella henselae (strain ATCC 49882 / DSM 28221 / CCUG 30454 / Houston 1) (Rochalimaea henselae) protein is Guanylate kinase.